Here is a 210-residue protein sequence, read N- to C-terminus: Glutathione S-transferase-like protein FUS3 (210 aa).

A GST N-terminal domain is found at 1-74 (MPNARVFKIL…YVAQSGPQAS (74 aa)). A GST C-terminal domain is found at 80–206 (DAMSSAKIRQ…GKPNFIEKRR (127 aa)).

Belongs to the GST superfamily.

Its function is as follows. Glutathione S-transferase-like protein; part of the gene cluster that mediates the biosynthesis of the mycotoxin fusarin C. Within the cluster, FUS1, FUS2, FUS8 and FUS9 are sufficient for fusarin production. The other FUS cluster members are not essential for fusarin C biosynthesis. The protein is Glutathione S-transferase-like protein FUS3 of Gibberella fujikuroi (strain CBS 195.34 / IMI 58289 / NRRL A-6831) (Bakanae and foot rot disease fungus).